A 479-amino-acid polypeptide reads, in one-letter code: Long-chain alcohol oxidase (479 aa).

Residues 14-183 (QILRPSAAYT…LAVRIRCREQ (170 aa)) form the FAD-binding PCMH-type domain. The residue at position 49 (His-49) is a Pros-8alpha-FAD histidine. Residues Thr-113, Gly-116, 120 to 123 (TGTH), and Ile-173 contribute to the FAD site. A helical membrane pass occupies residues 241–258 (LYWLGTMDYGLILQILFL). FAD is bound by residues Arg-369 and His-425.

The protein belongs to the oxygen-dependent FAD-linked oxidoreductase family. It depends on FAD as a cofactor.

The protein localises to the cell membrane. The catalysed reaction is a long-chain primary fatty alcohol + O2 = a long-chain fatty aldehyde + H2O2. The enzyme catalyses dodecan-1-ol + O2 = dodecanal + H2O2. It carries out the reaction tetradecan-1-ol + O2 = tetradecanal + H2O2. It catalyses the reaction octan-1-ol + O2 = octanal + H2O2. The catalysed reaction is decan-1-ol + O2 = decanal + H2O2. Its pathway is lipid metabolism; fatty acid metabolism. Its function is as follows. In vitro catalyzes the oxidation of a range of fatty alcohols having a carbon chain length of six and above, with a reduction of O2 to H2O2. Shows the highest activity with 1-dodecanol. Is likely involved in lipid metabolism. The sequence is that of Long-chain alcohol oxidase from Uncultured marine euryarchaeote.